The sequence spans 295 residues: Ethanolamine ammonia-lyase small subunit (295 aa).

Adenosylcob(III)alamin-binding residues include valine 209 and glutamate 230.

Belongs to the EutC family. The basic unit is a heterodimer which dimerizes to form tetramers. The heterotetramers trimerize; 6 large subunits form a core ring with 6 small subunits projecting outwards. The cofactor is adenosylcob(III)alamin.

It is found in the bacterial microcompartment. It carries out the reaction ethanolamine = acetaldehyde + NH4(+). It participates in amine and polyamine degradation; ethanolamine degradation. Functionally, catalyzes the deamination of various vicinal amino-alcohols to oxo compounds. Allows this organism to utilize ethanolamine as the sole source of nitrogen and carbon in the presence of external vitamin B12. This chain is Ethanolamine ammonia-lyase small subunit, found in Clostridium perfringens (strain ATCC 13124 / DSM 756 / JCM 1290 / NCIMB 6125 / NCTC 8237 / Type A).